We begin with the raw amino-acid sequence, 132 residues long: D-beta-hydroxybutyrate dehydrogenase, mitochondrial (132 aa).

Position 3 to 27 (3 to 27 (LVTGCDSGFGFSLAKHLHSKGFLVF)) interacts with NAD(+). An N6-acetyllysine modification is found at Lys17. Ser59 provides a ligand contact to substrate. Tyr66 functions as the Proton acceptor in the catalytic mechanism. At Lys70 the chain carries N6-acetyllysine. Residue Ser77 is glycosylated (O-linked (GlcNAc) serine). Residue Ser104 is modified to Phosphoserine.

This sequence belongs to the short-chain dehydrogenases/reductases (SDR) family. Homotetramer.

The protein localises to the mitochondrion inner membrane. Its subcellular location is the mitochondrion matrix. The enzyme catalyses (R)-3-hydroxybutanoate + NAD(+) = acetoacetate + NADH + H(+). With respect to regulation, requires phosphatidylcholine as an allosteric activator for enzymatic activity. The chain is D-beta-hydroxybutyrate dehydrogenase, mitochondrial from Mesocricetus auratus (Golden hamster).